The following is a 775-amino-acid chain: 5-methyltetrahydropteroyltriglutamate--homocysteine methyltransferase (775 aa).

Residues 16-19 (REMK) and Lys115 each bind 5-methyltetrahydropteroyltri-L-glutamate. L-homocysteine-binding positions include 435-437 (IGS) and Glu488. Residues 435 to 437 (IGS) and Glu488 each bind L-methionine. 5-methyltetrahydropteroyltri-L-glutamate contacts are provided by residues 519 to 520 (RC) and Trp565. Asp603 provides a ligand contact to L-homocysteine. Asp603 contributes to the L-methionine binding site. Glu609 provides a ligand contact to 5-methyltetrahydropteroyltri-L-glutamate. Residues His645, Cys647, and Glu669 each contribute to the Zn(2+) site. His698 (proton donor) is an active-site residue. Residue Cys730 participates in Zn(2+) binding.

The protein belongs to the vitamin-B12 independent methionine synthase family. Zn(2+) serves as cofactor.

It carries out the reaction 5-methyltetrahydropteroyltri-L-glutamate + L-homocysteine = tetrahydropteroyltri-L-glutamate + L-methionine. The protein operates within amino-acid biosynthesis; L-methionine biosynthesis via de novo pathway; L-methionine from L-homocysteine (MetE route): step 1/1. In terms of biological role, catalyzes the transfer of a methyl group from 5-methyltetrahydrofolate to homocysteine resulting in methionine formation. This chain is 5-methyltetrahydropteroyltriglutamate--homocysteine methyltransferase, found in Coxiella burnetii (strain Dugway 5J108-111).